The following is a 360-amino-acid chain: U7 snRNA-associated Sm-like protein LSm11 (360 aa).

Residues 1-29 (MEERERGARSAGAGSPARPPSPRLDVSSD) form a disordered region. Ser-15 and Ser-21 each carry phosphoserine. Arg-41 carries the post-translational modification Omega-N-methylarginine. The disordered stretch occupies residues 68 to 143 (RGGGRGRGRA…PGRSRKAPRN (76 aa)). Low complexity predominate over residues 78–94 (RGAAAGSGVPAAPGPSG). Residue Lys-120 forms a Glycyl lysine isopeptide (Lys-Gly) (interchain with G-Cter in SUMO2) linkage. Ser-154 carries the post-translational modification Phosphoserine. In terms of domain architecture, Sm spans 154–229 (SPLGELHRCI…LTLTRLFDRL (76 aa)). Positions 171 to 204 (VHIRTFKGLRGVCTGFLVAFDKFWNMALTDVDET) are SM 1. Residues 268-333 (ADTGRGSHKR…SRKKKRKPKV (66 aa)) are disordered. Residue Ser-280 is modified to Phosphoserine. The span at 299–322 (GRTTRTDGSSVGGTFSRATTLSRG) shows a compositional bias: polar residues. An SM 2 region spans residues 343–356 (INQIFIRGENVLLV).

This sequence belongs to the snRNP Sm proteins family. In terms of assembly, component of the heptameric ring U7 snRNP complex, or U7 Sm protein core complex, at least composed of LSM10, LSM11, SNRPB, SNRPD3, SNRPE, SNRPF, SNRPG and U7 snRNA. Formation of the U7 snRNP is an ATP-dependent process mediated by a specialized SMN complex containing at least the Sm protein core complex and additionally, the U7-specific LSM10 and LSM11 proteins. Identified in a histone pre-mRNA complex, at least composed of ERI1, LSM11, SLBP, SNRPB, SYNCRIP and YBX1. Interacts (via the Sm domains) with CLNS1A. Interacts with SMN and ZNF473. Interacts with PRMT5 and WDR77.

The protein resides in the nucleus. Component of the U7 snRNP complex that is involved in the histone 3'-end pre-mRNA processing. Increases U7 snRNA levels but not histone 3'-end pre-mRNA processing activity, when overexpressed. Required for cell cycle progression from G1 to S phases. Binds specifically to the Sm-binding site of U7 snRNA. This chain is U7 snRNA-associated Sm-like protein LSm11, found in Homo sapiens (Human).